Reading from the N-terminus, the 97-residue chain is Large ribosomal subunit protein bL28 (97 aa).

It belongs to the bacterial ribosomal protein bL28 family.

The chain is Large ribosomal subunit protein bL28 from Rickettsia canadensis (strain McKiel).